The sequence spans 179 residues: MSRVGKKLLEIPSDVTVTLNDNNTVAVKGPKGELTRTFHPDMEIKVEDNVLTVARPSDQKEHRALHGTTRSLLGNMVEGVSKGFERGLELVGVGYRASKSGNKLVLNVGYSHPVEIVPEEGIEIEVPSQTKVVVKGTDKERVGAIAANIRAVRSPEPYKGKGIRYEGEVVRRKEGKSAK.

The protein belongs to the universal ribosomal protein uL6 family. As to quaternary structure, part of the 50S ribosomal subunit.

This protein binds to the 23S rRNA, and is important in its secondary structure. It is located near the subunit interface in the base of the L7/L12 stalk, and near the tRNA binding site of the peptidyltransferase center. In Bacillus subtilis (strain 168), this protein is Large ribosomal subunit protein uL6.